The following is a 261-amino-acid chain: Undecaprenyl-diphosphatase (261 aa).

Helical transmembrane passes span arginine 38 to phenylalanine 58, arginine 75 to valine 95, isoleucine 106 to valine 126, valine 136 to glycine 156, phenylalanine 181 to leucine 201, valine 217 to isoleucine 237, and serine 241 to threonine 261.

Belongs to the UppP family.

Its subcellular location is the cell inner membrane. The catalysed reaction is di-trans,octa-cis-undecaprenyl diphosphate + H2O = di-trans,octa-cis-undecaprenyl phosphate + phosphate + H(+). Its function is as follows. Catalyzes the dephosphorylation of undecaprenyl diphosphate (UPP). Confers resistance to bacitracin. The chain is Undecaprenyl-diphosphatase from Xylella fastidiosa (strain Temecula1 / ATCC 700964).